Consider the following 738-residue polypeptide: Sporulation kinase E (738 aa).

4 consecutive PAS domains span residues 29–99 (ELNQ…FKKG), 150–220 (NEQL…NRKG), 271–342 (SEER…YGEI), and 391–462 (SELK…FDEM). Positions 523 to 729 (GIAHEIRNPM…VFHITLPVRQ (207 aa)) constitute a Histidine kinase domain. Phosphohistidine; by autocatalysis is present on His-526.

It carries out the reaction ATP + protein L-histidine = ADP + protein N-phospho-L-histidine.. Its function is as follows. Phosphorylates the sporulation-regulatory protein spo0A under biofilm growth conditions. Also able to weakly phosphorylate spo0F. The polypeptide is Sporulation kinase E (kinE) (Bacillus subtilis (strain 168)).